The following is a 73-amino-acid chain: Sec-independent protein translocase protein TatA (73 aa).

A helical membrane pass occupies residues Met1–Gly21.

The protein belongs to the TatA/E family. In terms of assembly, the Tat system comprises two distinct complexes: a TatABC complex, containing multiple copies of TatA, TatB and TatC subunits, and a separate TatA complex, containing only TatA subunits. Substrates initially bind to the TatABC complex, which probably triggers association of the separate TatA complex to form the active translocon.

Its subcellular location is the cell inner membrane. Part of the twin-arginine translocation (Tat) system that transports large folded proteins containing a characteristic twin-arginine motif in their signal peptide across membranes. TatA could form the protein-conducting channel of the Tat system. The polypeptide is Sec-independent protein translocase protein TatA (Mesorhizobium japonicum (strain LMG 29417 / CECT 9101 / MAFF 303099) (Mesorhizobium loti (strain MAFF 303099))).